The following is a 434-amino-acid chain: Putative magnesium transporter MRS2-D (434 aa).

Disordered regions lie at residues 1–21 (MAAR…AAGE), 126–171 (AASP…DGEA), and 279–311 (EASE…AGGG). Positions 9–21 (AAGAGAPAPAAGE) are enriched in low complexity. The span at 279–291 (EASELEDHSSRDE) shows a compositional bias: basic and acidic residues. Helical transmembrane passes span 367-387 (GILL…TGVF) and 405-425 (FPCA…AALL).

It belongs to the CorA metal ion transporter (MIT) (TC 1.A.35.5) family.

Its subcellular location is the membrane. Putative magnesium transporter. The sequence is that of Putative magnesium transporter MRS2-D (MRS2-D) from Oryza sativa subsp. indica (Rice).